The following is a 304-amino-acid chain: Ribosomal protein L11 methyltransferase (304 aa).

4 residues coordinate S-adenosyl-L-methionine: Thr152, Gly173, Asp195, and Asn234.

It belongs to the methyltransferase superfamily. PrmA family.

The protein localises to the cytoplasm. It carries out the reaction L-lysyl-[protein] + 3 S-adenosyl-L-methionine = N(6),N(6),N(6)-trimethyl-L-lysyl-[protein] + 3 S-adenosyl-L-homocysteine + 3 H(+). Its function is as follows. Methylates ribosomal protein L11. This chain is Ribosomal protein L11 methyltransferase, found in Cupriavidus metallidurans (strain ATCC 43123 / DSM 2839 / NBRC 102507 / CH34) (Ralstonia metallidurans).